The following is a 548-amino-acid chain: Beta-lactamase-like protein 2 (548 aa).

A signal peptide spans 1–24; sequence MKIMNKQSITIFLIICFLINLILS. 4 N-linked (GlcNAc...) asparagine glycosylation sites follow: N237, N258, N443, and N459.

It belongs to the beta-lactamase family.

Its subcellular location is the secreted. The chain is Beta-lactamase-like protein 2 from Dictyostelium discoideum (Social amoeba).